The chain runs to 396 residues: Cytochrome P450 121 (396 aa).

A heme-binding site is contributed by Cys345.

Belongs to the cytochrome P450 family. The cofactor is heme.

It is found in the cytoplasm. The protein is Cytochrome P450 121 (cyp121) of Mycobacterium bovis (strain ATCC BAA-935 / AF2122/97).